The following is a 298-amino-acid chain: Aspartate carbamoyltransferase catalytic subunit (298 aa).

Carbamoyl phosphate is bound by residues Arg50 and Thr51. An L-aspartate-binding site is contributed by Lys79. Residues Arg100, His128, and Gln131 each contribute to the carbamoyl phosphate site. The L-aspartate site is built by Arg160 and Arg221. The carbamoyl phosphate site is built by Leu260 and Pro261.

It belongs to the aspartate/ornithine carbamoyltransferase superfamily. ATCase family. Heterooligomer of catalytic and regulatory chains.

It carries out the reaction carbamoyl phosphate + L-aspartate = N-carbamoyl-L-aspartate + phosphate + H(+). The protein operates within pyrimidine metabolism; UMP biosynthesis via de novo pathway; (S)-dihydroorotate from bicarbonate: step 2/3. Catalyzes the condensation of carbamoyl phosphate and aspartate to form carbamoyl aspartate and inorganic phosphate, the committed step in the de novo pyrimidine nucleotide biosynthesis pathway. The chain is Aspartate carbamoyltransferase catalytic subunit from Methanosphaerula palustris (strain ATCC BAA-1556 / DSM 19958 / E1-9c).